The sequence spans 466 residues: Exodeoxyribonuclease 7 large subunit (466 aa).

Belongs to the XseA family. As to quaternary structure, heterooligomer composed of large and small subunits.

It is found in the cytoplasm. The enzyme catalyses Exonucleolytic cleavage in either 5'- to 3'- or 3'- to 5'-direction to yield nucleoside 5'-phosphates.. In terms of biological role, bidirectionally degrades single-stranded DNA into large acid-insoluble oligonucleotides, which are then degraded further into small acid-soluble oligonucleotides. This Vesicomyosocius okutanii subsp. Calyptogena okutanii (strain HA) protein is Exodeoxyribonuclease 7 large subunit.